Reading from the N-terminus, the 290-residue chain is Appressorium protein ROW2 (290 aa).

The signal sequence occupies residues 1-19; that stretch reads MFTKSVFIALVAGVLGVTA. The tract at residues 266–290 is disordered; that stretch reads AIKTPSKRSVMATHVKRSPEWEEEP.

Its subcellular location is the secreted. The protein localises to the nucleus. Its function is as follows. Plays a role in the formation of the appressorium, a specialized infection structure with the purpose of penetrating the host surface, and is required for proper remodeling of the appressorium wall and vesicle secretion. The sequence is that of Appressorium protein ROW2 from Mycosarcoma maydis (Corn smut fungus).